Reading from the N-terminus, the 292-residue chain is MPWIQIRINATAKTADKVSNMLLGRGAQPVTFMDAQDVPVYEPLPGETPLWGETEVMGLFDAETDPAPTIAFFQQIFGEDVGYKVEQLEDKDWVREWMDHFHPMQFGERLWICPSWRDVPNPDAVNVMLDPGLAFGTGTHPTTALCLQWLDGLDLAGKTVVDFGCGSGILGIAALKLGAARVIGIDIDPQAIQASHDNAERNGVAGQIELYLPADQPQDVEADVVVANILAGPLRELAPLIAGHGKPGSLMALSGVLESQAPELETIYGQWFDMDPTAVKEEWCRLSGRKHG.

S-adenosyl-L-methionine-binding residues include Thr-143, Gly-164, Asp-186, and Asn-228.

This sequence belongs to the methyltransferase superfamily. PrmA family.

The protein resides in the cytoplasm. It carries out the reaction L-lysyl-[protein] + 3 S-adenosyl-L-methionine = N(6),N(6),N(6)-trimethyl-L-lysyl-[protein] + 3 S-adenosyl-L-homocysteine + 3 H(+). In terms of biological role, methylates ribosomal protein L11. This chain is Ribosomal protein L11 methyltransferase, found in Aeromonas salmonicida (strain A449).